The chain runs to 101 residues: Small ribosomal subunit protein bS18c (101 aa).

Belongs to the bacterial ribosomal protein bS18 family. In terms of assembly, part of the 30S ribosomal subunit.

Its subcellular location is the plastid. It is found in the chloroplast. In Guizotia abyssinica (Niger), this protein is Small ribosomal subunit protein bS18c.